Reading from the N-terminus, the 419-residue chain is UPF0229 protein Tbd_1233 (419 aa).

The interval 85–108 is disordered; it reads GDRIDRPAGEGGGGSGGSPDGEGM. Residues 93-104 are compositionally biased toward gly residues; it reads GEGGGGSGGSPD.

This sequence belongs to the UPF0229 family.

The polypeptide is UPF0229 protein Tbd_1233 (Thiobacillus denitrificans (strain ATCC 25259 / T1)).